A 369-amino-acid polypeptide reads, in one-letter code: Anhydro-N-acetylmuramic acid kinase (369 aa).

ATP is bound at residue 9–16; the sequence is GTSLDAVD.

The protein belongs to the anhydro-N-acetylmuramic acid kinase family.

It catalyses the reaction 1,6-anhydro-N-acetyl-beta-muramate + ATP + H2O = N-acetyl-D-muramate 6-phosphate + ADP + H(+). It participates in amino-sugar metabolism; 1,6-anhydro-N-acetylmuramate degradation. It functions in the pathway cell wall biogenesis; peptidoglycan recycling. Its function is as follows. Catalyzes the specific phosphorylation of 1,6-anhydro-N-acetylmuramic acid (anhMurNAc) with the simultaneous cleavage of the 1,6-anhydro ring, generating MurNAc-6-P. Is required for the utilization of anhMurNAc either imported from the medium or derived from its own cell wall murein, and thus plays a role in cell wall recycling. In Phenylobacterium zucineum (strain HLK1), this protein is Anhydro-N-acetylmuramic acid kinase.